A 147-amino-acid polypeptide reads, in one-letter code: D-aminoacyl-tRNA deacylase (147 aa).

A Gly-cisPro motif, important for rejection of L-amino acids motif is present at residues 136 to 137 (GP).

This sequence belongs to the DTD family. As to quaternary structure, homodimer.

Its subcellular location is the cytoplasm. It carries out the reaction glycyl-tRNA(Ala) + H2O = tRNA(Ala) + glycine + H(+). The enzyme catalyses a D-aminoacyl-tRNA + H2O = a tRNA + a D-alpha-amino acid + H(+). Its function is as follows. An aminoacyl-tRNA editing enzyme that deacylates mischarged D-aminoacyl-tRNAs. Also deacylates mischarged glycyl-tRNA(Ala), protecting cells against glycine mischarging by AlaRS. Acts via tRNA-based rather than protein-based catalysis; rejects L-amino acids rather than detecting D-amino acids in the active site. By recycling D-aminoacyl-tRNA to D-amino acids and free tRNA molecules, this enzyme counteracts the toxicity associated with the formation of D-aminoacyl-tRNA entities in vivo and helps enforce protein L-homochirality. The polypeptide is D-aminoacyl-tRNA deacylase (Streptococcus pneumoniae serotype 2 (strain D39 / NCTC 7466)).